The following is a 251-amino-acid chain: Adenosylcobinamide-GDP ribazoletransferase (251 aa).

Helical transmembrane passes span 36–56 (LYPF…FVLS), 60–80 (VPIM…TGFL), 110–130 (VGAF…AGMF), 141–161 (ILIF…VSQE), 181–201 (EIIL…TLGI), 202–222 (NYLI…LKVK), and 231–251 (DVAG…LGII).

Belongs to the CobS family. Mg(2+) is required as a cofactor.

Its subcellular location is the cell membrane. It catalyses the reaction alpha-ribazole + adenosylcob(III)inamide-GDP = adenosylcob(III)alamin + GMP + H(+). The enzyme catalyses alpha-ribazole 5'-phosphate + adenosylcob(III)inamide-GDP = adenosylcob(III)alamin 5'-phosphate + GMP + H(+). It functions in the pathway cofactor biosynthesis; adenosylcobalamin biosynthesis; adenosylcobalamin from cob(II)yrinate a,c-diamide: step 7/7. Functionally, joins adenosylcobinamide-GDP and alpha-ribazole to generate adenosylcobalamin (Ado-cobalamin). Also synthesizes adenosylcobalamin 5'-phosphate from adenosylcobinamide-GDP and alpha-ribazole 5'-phosphate. In Clostridium perfringens (strain ATCC 13124 / DSM 756 / JCM 1290 / NCIMB 6125 / NCTC 8237 / Type A), this protein is Adenosylcobinamide-GDP ribazoletransferase.